The following is a 318-amino-acid chain: tRNA-cytidine(32) 2-sulfurtransferase (318 aa).

Positions 52 to 57 (SGGKDS) match the PP-loop motif motif. [4Fe-4S] cluster contacts are provided by Cys-127, Cys-130, and Cys-218.

Belongs to the TtcA family. Homodimer. Mg(2+) serves as cofactor. [4Fe-4S] cluster is required as a cofactor.

The protein resides in the cytoplasm. It catalyses the reaction cytidine(32) in tRNA + S-sulfanyl-L-cysteinyl-[cysteine desulfurase] + AH2 + ATP = 2-thiocytidine(32) in tRNA + L-cysteinyl-[cysteine desulfurase] + A + AMP + diphosphate + H(+). The protein operates within tRNA modification. In terms of biological role, catalyzes the ATP-dependent 2-thiolation of cytidine in position 32 of tRNA, to form 2-thiocytidine (s(2)C32). The sulfur atoms are provided by the cysteine/cysteine desulfurase (IscS) system. This is tRNA-cytidine(32) 2-sulfurtransferase from Actinobacillus pleuropneumoniae serotype 7 (strain AP76).